Here is a 177-residue protein sequence, read N- to C-terminus: Calerythrin (177 aa).

EF-hand domains lie at 5-40 (IASD…IAEA), 45-90 (AGAA…NLIF), 100-134 (VLGP…ALGM), and 134-169 (MSKA…FHFG). Residues Asp18, Asp20, Asn22, and Asp29 each coordinate Ca(2+). Residues Asp113, Asn115, Asp117, Gln119, Glu124, Asp147, Asn149, Asn151, Glu153, and Glu158 each contribute to the Ca(2+) site.

This is Calerythrin from Saccharopolyspora erythraea (Streptomyces erythraeus).